The following is a 275-amino-acid chain: NH(3)-dependent NAD(+) synthetase (275 aa).

Position 46 to 53 (46 to 53 (GISGGQDS)) interacts with ATP. Aspartate 52 lines the Mg(2+) pocket. Arginine 140 lines the deamido-NAD(+) pocket. Residue threonine 160 participates in ATP binding. Residue glutamate 165 participates in Mg(2+) binding. 2 residues coordinate deamido-NAD(+): lysine 173 and aspartate 180. ATP-binding residues include lysine 189 and threonine 211. 260-261 (HK) contributes to the deamido-NAD(+) binding site.

Belongs to the NAD synthetase family. Homodimer.

It catalyses the reaction deamido-NAD(+) + NH4(+) + ATP = AMP + diphosphate + NAD(+) + H(+). It functions in the pathway cofactor biosynthesis; NAD(+) biosynthesis; NAD(+) from deamido-NAD(+) (ammonia route): step 1/1. Functionally, catalyzes the ATP-dependent amidation of deamido-NAD to form NAD. Uses ammonia as a nitrogen source. The chain is NH(3)-dependent NAD(+) synthetase from Shigella boydii serotype 18 (strain CDC 3083-94 / BS512).